Consider the following 892-residue polypeptide: MGNWKRLLTSAAVVMVVLAGLLLAIVLAATHFLVEWWWFKSLDLGAYFWLRFLYRYILSGGVTLFFFLIFFLNFWAASQYLGVDQAIYAAGSEESRYRRWLRMFQTGALPVYLPLSVFLAVLVALPFYHEWEAGLLFFFAPAAGVTEPVFGEDAGFHMFRIPILVLIQSELLVCASVLAVMVAALYWVEHEFSPAHRRPWPRGARIHLNLLVVLVAVVAAWGYVLQRDELLYVDAHEPVFFGPGLIELRYHLPLIWVEIVSLVVGVVAALWFAQRHRGLKLALTCALVWVSAAALRKIDVVPQLIDRFVVKPNPVKTEREFIKYNIEATLAAFDLDEIRTIDITAAPEGSETIDPHVREHLHNIPVWDPEYLDDVYQQLQGIRPYYSFTEVDTARYLVNGQIEQVNLAAREINLAKLPEEARNWENIHLRYTHGYGAVITPAAQSGDQPMQWWLRDLNMHSDVGLTTEKPDIYFGLENLDYAIVPNRLNIVDIASFDQGSSQNYSGNGGVPISSLLRRLLLSIYFRDERLFFSLNITENSQALFHRNIIERINTVTPFLALDRDPYIVVTPQRIFWIVDAYTTLNSYPVSKRMRYKFRGDTEEREFNYIRNSVKIVVDAFDGSLDYYVVDHDDPVLKGYIKAYPGLFQDASAMPPLIRDQLRFPHDFFEIQMRMYAKYHQTQPELFYQQAETWDFAKVGVRLRDGRTVMRTVAPYYFTTQLDGCENMQNFVLINPMTPIGRNNMSVLAIGGALRPDACGMPYSKSIVLYKYSKDVQVDGPAQVSAMIDQDAEIAKEFALWDQKGSHLTRGRIIIVPIGRSLLYVQPVYIESTSSVKIPELARVILSMGDIVVMETSLEAALNKLEERLIALQKARGIVPVSPVRDSPGMHPM.

Transmembrane regions (helical) follow at residues 7 to 27 (LLTS…AIVL), 57 to 77 (ILSG…FWAA), 107 to 127 (GALP…ALPF), 163 to 183 (ILVL…VMVA), 206 to 226 (IHLN…YVLQ), 252 to 272 (LPLI…ALWF), and 281 to 301 (LALT…IDVV).

It belongs to the UPF0182 family.

The protein localises to the cell membrane. The sequence is that of UPF0182 protein MCA2716 from Methylococcus capsulatus (strain ATCC 33009 / NCIMB 11132 / Bath).